The primary structure comprises 461 residues: Glucan endo-1,3-beta-glucosidase (461 aa).

An N-terminal signal peptide occupies residues 1 to 23; it reads MPLLILLMLLAAGAAGAESATPS. The Proton donor role is filled by E123. E265 acts as the Nucleophile in catalysis. A disordered region spans residues 350–375; the sequence is GASVAPTPSPNPSPNPSPKPAPSGGG. Residues 356–370 are compositionally biased toward pro residues; it reads TPSPNPSPNPSPKPA. C378 and C439 are oxidised to a cystine.

The protein belongs to the glycosyl hydrolase 17 family. In terms of processing, contains two additional disulfide bonds.

The enzyme catalyses Hydrolysis of (1-&gt;3)-beta-D-glucosidic linkages in (1-&gt;3)-beta-D-glucans.. Is thought to be an important plant defense-related product against fungal pathogens. The sequence is that of Glucan endo-1,3-beta-glucosidase (GLC1) from Triticum aestivum (Wheat).